Reading from the N-terminus, the 413-residue chain is Peptidase T (413 aa).

A Zn(2+)-binding site is contributed by H81. The active site involves D83. D143 is a Zn(2+) binding site. The Proton acceptor role is filled by E178. Residues E179, D201, and H383 each coordinate Zn(2+).

The protein belongs to the peptidase M20B family. The cofactor is Zn(2+).

It localises to the cytoplasm. It catalyses the reaction Release of the N-terminal residue from a tripeptide.. In terms of biological role, cleaves the N-terminal amino acid of tripeptides. This is Peptidase T from Lactococcus lactis subsp. cremoris (Streptococcus cremoris).